We begin with the raw amino-acid sequence, 333 residues long: Probable 4-hydroxyproline 2-epimerase (333 aa).

Cys-90 (proton acceptor) is an active-site residue. Residues Gly-91 to His-92, His-223, and Asp-249 contribute to the substrate site. Cys-253 functions as the Proton donor in the catalytic mechanism. Residue Gly-254–Thr-255 participates in substrate binding.

This sequence belongs to the proline racemase family.

The catalysed reaction is trans-4-hydroxy-L-proline = cis-4-hydroxy-D-proline. Functionally, likely catalyzes the epimerization of trans-4-hydroxy-L-proline (t4LHyp) to cis-4-hydroxy-D-proline (c4DHyp). May be involved in the degradation pathway that converts t4LHyp to alpha-ketoglutarate, which would allow R.meliloti to grow on t4LHyp as a sole carbon source. The polypeptide is Probable 4-hydroxyproline 2-epimerase (Rhizobium meliloti (strain 1021) (Ensifer meliloti)).